A 173-amino-acid polypeptide reads, in one-letter code: Nanos homolog 3 (173 aa).

A disordered region spans residues Lys-23 to Ser-51. The Nanos-type zinc-finger motif lies at Leu-57 to Leu-111. 8 residues coordinate Zn(2+): Cys-58, Cys-61, His-74, Cys-85, Cys-93, Cys-96, His-104, and Cys-109. 2 short sequence motifs (C2HC) span residues Cys-58 to Cys-85 and Cys-93 to Cys-109. The disordered stretch occupies residues Thr-123 to Thr-173. Residues Val-133–His-145 show a composition bias toward basic and acidic residues. Residues Ser-161–Thr-173 show a composition bias toward low complexity.

It belongs to the nanos family. As to quaternary structure, binds mRNA from germ cells. Interacts with PUM2. Ovary, testis and brain (at protein level). In the ovaries, expressed during multiple stages of oogenesis, including primordial, primary, secondary and antral follicles with the highest expression in the oocytes. In the testis, expressed in germ cells, type A spermatogonia (SA), primary spermatocytes (S1), round spermatids (S3) and elongated spermatids.

The protein resides in the nucleus. It is found in the cytoplasm. The protein localises to the stress granule. Its subcellular location is the P-body. Plays a role in the maintenance of the undifferentiated state of germ cells regulating the spermatogonia cell cycle and inducing a prolonged transit in G1 phase. Affects cell proliferation probably by repressing translation of specific mRNAs. Maintains the germ cell lineage by suppressing both Bax-dependent and -independent apoptotic pathways. Essential in the early stage embryo to protect the migrating primordial germ cells (PGCs) from apoptosis. The sequence is that of Nanos homolog 3 (NANOS3) from Homo sapiens (Human).